Here is a 110-residue protein sequence, read N- to C-terminus: Large ribosomal subunit protein uL22 (110 aa).

It belongs to the universal ribosomal protein uL22 family. As to quaternary structure, part of the 50S ribosomal subunit.

Its function is as follows. This protein binds specifically to 23S rRNA; its binding is stimulated by other ribosomal proteins, e.g. L4, L17, and L20. It is important during the early stages of 50S assembly. It makes multiple contacts with different domains of the 23S rRNA in the assembled 50S subunit and ribosome. Functionally, the globular domain of the protein is located near the polypeptide exit tunnel on the outside of the subunit, while an extended beta-hairpin is found that lines the wall of the exit tunnel in the center of the 70S ribosome. The polypeptide is Large ribosomal subunit protein uL22 (Pseudoalteromonas translucida (strain TAC 125)).